A 321-amino-acid polypeptide reads, in one-letter code: Olfactory receptor 3A3 (321 aa).

Over 1-34 (MSLQKLMEPEAGTNRTAVAEFILLGLVQTEEMQP) the chain is Extracellular. Asparagine 14 is a glycosylation site (N-linked (GlcNAc...) asparagine). The chain crosses the membrane as a helical span at residues 35 to 58 (VVFVLLLFAYLVTTGGNLSILAAV). Over 59–66 (LVEPKLHA) the chain is Cytoplasmic. A helical membrane pass occupies residues 67–88 (PMYFFLGNLSVLDVGCITVTVP). The Extracellular portion of the chain corresponds to 89–109 (AMLGRLLSHKSTISYDACLSQ). A disulfide bridge connects residues cysteine 106 and cysteine 198. Residues 110–129 (LFFFHLLAGMDCFLLTAMAY) form a helical membrane-spanning segment. At 130 to 149 (DRLLAICQPLTYSTRMSQTV) the chain is on the cytoplasmic side. Residues 150-167 (QRMLVAASWACAFTNALT) traverse the membrane as a helical segment. The Extracellular portion of the chain corresponds to 168-205 (HTVAMSTLNFCGPNEVNHFYCDLPQLFQLSCSSTQLNE). A helical transmembrane segment spans residues 206–228 (LLLFVAAAFMAVAPLVFISVSYA). Over 229–245 (HVVAAVLQIRSAEGRKK) the chain is Cytoplasmic. Residues 246 to 268 (AFSTCGSHLTVVGIFYGTGVFSY) form a helical membrane-spanning segment. Over 269–281 (MRLGSVESSDKDK) the chain is Extracellular. The chain crosses the membrane as a helical span at residues 282–301 (GVGVFMTVINPMLNPLIYSL). Over 302 to 321 (RNTDVQGALCQLLVGKRSLT) the chain is Cytoplasmic.

It belongs to the G-protein coupled receptor 1 family.

Its subcellular location is the cell membrane. In terms of biological role, odorant receptor. The polypeptide is Olfactory receptor 3A3 (OR3A3) (Homo sapiens (Human)).